Consider the following 179-residue polypeptide: Large ribosomal subunit protein uL6 (179 aa).

Belongs to the universal ribosomal protein uL6 family. In terms of assembly, part of the 50S ribosomal subunit.

Its function is as follows. This protein binds to the 23S rRNA, and is important in its secondary structure. It is located near the subunit interface in the base of the L7/L12 stalk, and near the tRNA binding site of the peptidyltransferase center. The protein is Large ribosomal subunit protein uL6 of Syntrophotalea carbinolica (strain DSM 2380 / NBRC 103641 / GraBd1) (Pelobacter carbinolicus).